The primary structure comprises 145 residues: Small ribosomal subunit protein eS19 (145 aa).

The residue at position 23 (lysine 23) is an N6-acetyllysine. The residue at position 67 (arginine 67) is an Omega-N-methylarginine. An N6-acetyllysine mark is found at lysine 111 and lysine 115. The residue at position 143 (lysine 143) is an N6-succinyllysine.

It belongs to the eukaryotic ribosomal protein eS19 family. As to quaternary structure, component of the small ribosomal subunit. Part of the small subunit (SSU) processome, composed of more than 70 proteins and the RNA chaperone small nucleolar RNA (snoRNA) U3. Interacts with RPS19BP1; the interaction is direct and mediates the integration of RPS19 in state post-A1. Interacts with RPS19BP1.

The protein localises to the cytoplasm. Its subcellular location is the nucleus. It is found in the nucleolus. Component of the small ribosomal subunit. The ribosome is a large ribonucleoprotein complex responsible for the synthesis of proteins in the cell. Required for pre-rRNA processing and maturation of 40S ribosomal subunits. Part of the small subunit (SSU) processome, first precursor of the small eukaryotic ribosomal subunit. During the assembly of the SSU processome in the nucleolus, many ribosome biogenesis factors, an RNA chaperone and ribosomal proteins associate with the nascent pre-rRNA and work in concert to generate RNA folding, modifications, rearrangements and cleavage as well as targeted degradation of pre-ribosomal RNA by the RNA exosome. The sequence is that of Small ribosomal subunit protein eS19 (RPS19) from Oryctolagus cuniculus (Rabbit).